The chain runs to 273 residues: Outer surface protein A (273 aa).

A signal peptide spans 1 to 16; sequence MKKYLLGIGLILALIA. The N-palmitoyl cysteine moiety is linked to residue C17. Residue C17 is the site of S-diacylglycerol cysteine attachment.

This sequence belongs to the OspA lipoprotein family.

It localises to the cell outer membrane. The protein localises to the cell surface. The polypeptide is Outer surface protein A (Borreliella burgdorferi (Lyme disease spirochete)).